The following is a 271-amino-acid chain: Aquaporin-2 (271 aa).

Over 1–11 (MWELRSIAFSR) the chain is Cytoplasmic. A helical transmembrane segment spans residues 12-32 (AVFAEFLATLLFVFFGLGSAL). Residues 33–40 (NWPQALPS) are Extracellular-facing. The helical transmembrane segment at 41–59 (VLQIAMAFGLGIGTLVQAL) threads the bilayer. Over 60–64 (GHISG) the chain is Cytoplasmic. Residues 65-74 (AHINPAVTVA) constitute an intramembrane region (discontinuously helical). The NPA 1 motif lies at 68–70 (NPA). Topologically, residues 75-85 (CLVGCHVSVLR) are cytoplasmic. A helical transmembrane segment spans residues 86 to 107 (AAFYVAAQLLGAVAGAALLHEI). At 108 to 127 (TPADIRGDLAVNALSNSTTA) the chain is on the extracellular side. Residue asparagine 123 is glycosylated (N-linked (GlcNAc...) asparagine). A helical membrane pass occupies residues 128–148 (GQAVTVELFLTLQLVLCIFAS). Residues 149–156 (TDERRGEN) are Cytoplasmic-facing. The chain crosses the membrane as a helical span at residues 157-176 (PGTPALSIGFSVALGHLLGI). Over 177 to 180 (HYTG) the chain is Extracellular. Residues 181-193 (CSMNPARSLAPAV) constitute an intramembrane region (discontinuously helical). The NPA 2 signature appears at 184-186 (NPA). The Extracellular portion of the chain corresponds to 194–201 (VTGKFDDH). A helical membrane pass occupies residues 202-222 (WVFWIGPLVGAILGSLLYNYV). Residues 223 to 271 (LFPPAKSLSERLAVLKGLEPDTDWEEREVRRRQSVELHSPQSLPRGTKA) lie on the Cytoplasmic side of the membrane. The disordered stretch occupies residues 248 to 271 (EREVRRRQSVELHSPQSLPRGTKA). The residue at position 256 (serine 256) is a Phosphoserine; by PKA. Over residues 261-271 (SPQSLPRGTKA) the composition is skewed to polar residues.

Belongs to the MIP/aquaporin (TC 1.A.8) family. As to quaternary structure, homotetramer. Interacts with micropeptide MIAC; the interaction leads to a reduction of filamentous actin fibers and inhibition of the EREG/EGFR signaling pathway. Post-translationally, ser-256 phosphorylation is necessary and sufficient for expression at the apical membrane. Endocytosis is not phosphorylation-dependent. In terms of processing, N-glycosylated. As to expression, expressed in collecting tubules in kidney medulla (at protein level). Detected in kidney.

The protein resides in the apical cell membrane. The protein localises to the basolateral cell membrane. Its subcellular location is the cell membrane. It localises to the cytoplasmic vesicle membrane. It is found in the golgi apparatus. The protein resides in the trans-Golgi network membrane. It carries out the reaction H2O(in) = H2O(out). The catalysed reaction is glycerol(in) = glycerol(out). Its function is as follows. Forms a water-specific channel that provides the plasma membranes of renal collecting duct with high permeability to water, thereby permitting water to move in the direction of an osmotic gradient. Plays an essential role in renal water homeostasis. Could also be permeable to glycerol. This is Aquaporin-2 from Homo sapiens (Human).